Here is a 94-residue protein sequence, read N- to C-terminus: RING finger protein Z (94 aa).

Over residues 1 to 19 the composition is skewed to polar residues; that stretch reads MGNCNGASKSNQPDSSRVT. The interval 1 to 20 is disordered; sequence MGNCNGASKSNQPDSSRVTQ. G2 carries N-myristoyl glycine; by host lipidation. The RING-type; atypical zinc finger occupies 39-75; it reads CKCCWFADTNLITCNDHYLCLRCHQVMLRNSDLCNIC. The PTAP/PSAP motif signature appears at 89–92; that stretch reads PTAP.

Belongs to the arenaviridae Z protein family. In terms of assembly, interacts with protein NP; this interaction probably directs the encapsidated genome to budding sites. Interacts (via RING domain) with polymerase L; this interaction inhibits viral transcription and replication, Z partially blocks the product exit tunnel for the releasing nascent RNA product. Interacts with the glycoprotein complex; this interaction plays a role in virion budding. Interacts with host eIF4E; this interaction results in eIF4E reduced affinity for its substrate, the 5'-m7 G cap structure. Interacts (via late-budding domain) with host TSG101; this interaction is essential for budding and release of viral particles. Interacts with host RPLP0; this interaction may serve to load ribosome-like particles inside the virion. Interacts with host PML; this interaction induces PML bodies redistribution in the cytoplasm upon viral infection. Myristoylation is required for the role of RING finger protein Z in assembly and budding.

The protein localises to the virion. The protein resides in the host cytoplasm. It is found in the host perinuclear region. It localises to the host cell membrane. In terms of biological role, plays a crucial role in virion assembly and budding. Expressed late in the virus life cycle, it acts as an inhibitor of viral transcription and RNA synthesis by interacting with the viral polymerase L. Presumably recruits the NP encapsidated genome to cellular membranes at budding sites via direct interaction with NP. Plays critical roles in the final steps of viral release by interacting with host TSG101, a member of the vacuolar protein-sorting pathway and using other cellular host proteins involved in vesicle formation pathway. The budding of the virus progeny occurs after association of protein Z with the viral glycoprotein complex SSP-GP1-GP2 at the cell periphery, step that requires myristoylation of protein Z. Also selectively represses protein production by associating with host eIF4E. In cell-based minigenome assay, has an inhibitory effect on the ribonucleoprotein machinery (vRNP), which is responsible for the replication and transcription of the viral genome. The sequence is that of RING finger protein Z from Akodon azarae (Azara's grass mouse).